Consider the following 666-residue polypeptide: Mitogen-activated protein kinase kinase kinase ANP1 (666 aa).

The Protein kinase domain occupies 69–331; the sequence is WRKGQLIGRG…ASELLKHPFV (263 aa). Residues 75–83 and lysine 98 contribute to the ATP site; that span reads IGRGAFGTV. Residues 101–131 adopt a coiled-coil conformation; that stretch reads LIAANFASKEKTQAHIQELEEEVKLLKNLSH. Residues lysine 109 and lysine 111 each participate in a glycyl lysine isopeptide (Lys-Gly) (interchain with G-Cter in ubiquitin) cross-link. Aspartate 197 serves as the catalytic Proton acceptor. Over residues 452–464 the composition is skewed to basic and acidic residues; the sequence is KFDESPGNGEKES. Disordered stretches follow at residues 452–481, 536–592, and 635–666; these read KFDE…DDDE, GFLK…DGVS, and QEIM…SPGK. The segment covering 538–558 has biased composition (low complexity); that stretch reads LKLPPKSRSPSRGPLGGSPSR. The span at 560–569 shows a compositional bias: polar residues; it reads TDATSCSKSP. Positions 620–643 form a coiled coil; the sequence is KKWKEELDQELERKRQEIMRQAGL. Over residues 647-660 the composition is skewed to basic and acidic residues; sequence PRDRGMSRQREKSR.

Belongs to the protein kinase superfamily. STE Ser/Thr protein kinase family. MAP kinase kinase kinase subfamily. As to expression, expressed in roots, inflorescence stems, flower buds and flowers. Low amount in rosette and cauline leaves.

The catalysed reaction is L-seryl-[protein] + ATP = O-phospho-L-seryl-[protein] + ADP + H(+). It carries out the reaction L-threonyl-[protein] + ATP = O-phospho-L-threonyl-[protein] + ADP + H(+). In terms of biological role, may be involved in an oxidative stress-mediated signaling cascade that phosphorylates downstream MAP kinases MPK3 and MPK6. May suppress auxin signaling that promotes cell cycle. Functionally redundant to ANP2 and ANP3 in the positive regulation of cytokinesis. In Arabidopsis thaliana (Mouse-ear cress), this protein is Mitogen-activated protein kinase kinase kinase ANP1 (ANP1).